The chain runs to 591 residues: PDZ and LIM domain protein 5 (591 aa).

Serine 2 carries the post-translational modification N-acetylserine. The residue at position 2 (serine 2) is a Phosphoserine. One can recognise a PDZ domain in the interval 2 to 85 (SNYSVSLVGP…SLNMTLQRAS (84 aa)). Lysine 89 is subject to N6-acetyllysine; alternate. Lysine 89 bears the N6-succinyllysine; alternate mark. A Glycyl lysine isopeptide (Lys-Gly) (interchain with G-Cter in SUMO2); alternate cross-link involves residue lysine 89. Glutamate 102, lysine 105, serine 111, serine 134, and serine 137 each carry phosphoserine. 2 disordered regions span residues 121-166 (TNMA…PTPV) and 186-398 (SADQ…DQDT). The span at 134 to 143 (SVSSPKVTSI) shows a compositional bias: polar residues. Positions 144 to 166 (PSPSSAFTPAHAATSSHASPTPV) are enriched in low complexity. Polar residues-rich tracts occupy residues 186–195 (SADQCSSPPN) and 205–217 (RQPT…SESA). Phosphoserine is present on residues glutamine 218, serine 228, and serine 260. Basic and acidic residues-rich tracts occupy residues 258–273 (DASK…DWRP) and 294–304 (HLTESENDNTK). Positions 310 to 339 (QEPSQQPASSGASPLSASEGPESPGSSRPS) are enriched in low complexity. Residues serine 313, proline 316, and serine 322 each carry the phosphoserine modification. Residue lysine 350 is modified to N6-acetyllysine. The segment covering 353–385 (GSTSVKSPSWQRPNQAAPSTGRISNNARSSGTG) has biased composition (polar residues). Residues serine 359 and serine 361 each carry the phosphoserine modification. LIM zinc-binding domains are found at residues 413–472 (PMCA…FFAP), 472–531 (PECG…LFGT), and 531–591 (TICR…SVNF).

Interacts with various PKC isoforms through the LIM domains. Interacts with actin and alpha-actinin through the PDZ domain. Interacts (via LIM domains) with SIPA1L1/SPAR; this interaction may occur preferentially with isoform 1.

The protein localises to the postsynaptic density. Its subcellular location is the presynapse. It is found in the postsynapse. It localises to the cytoplasm. The protein resides in the cytosol. May play an important role in the heart development by scaffolding PKC to the Z-disk region. May play a role in the regulation of cardiomyocyte expansion. Isoforms lacking the LIM domains may negatively modulate the scaffolding activity of isoform 1. Overexpression promotes the development of heart hypertrophy. Contributes to the regulation of dendritic spine morphogenesis in neurons. May be required to restrain postsynaptic growth of excitatory synapses. Isoform 1, but not isoform 2, expression favors spine thinning and elongation. This chain is PDZ and LIM domain protein 5, found in Mus musculus (Mouse).